Consider the following 345-residue polypeptide: Annexin A9 (345 aa).

4 Annexin repeats span residues 41 to 112 (FSVD…ALLQ), 113 to 184 (PTAQ…ALAK), 197 to 266 (NLAE…GLAS), and 270 to 341 (NTPL…ALCR).

The protein belongs to the annexin family. Homodimer. Expressed in the stratified squamous skin epithelium, but not in epithelia of other types (at protein level).

Low affinity receptor for acetylcholine known to be targeted by disease-causing pemphigus vulgaris antibodies in keratinocytes. The polypeptide is Annexin A9 (ANXA9) (Homo sapiens (Human)).